Here is a 237-residue protein sequence, read N- to C-terminus: Insulin-like growth factor-binding protein 6 (237 aa).

Positions 1-25 (MTPHRLLPPLLLTLLLAARPGGALA) are cleaved as a signal peptide. An IGFBP N-terminal domain is found at 26–105 (RCPGCGQGVS…LQGRGRCGRA (80 aa)). Intrachain disulfides connect Cys27/Cys30, Cys38/Cys42, Cys55/Cys61, Cys69/Cys82, and Cys76/Cys102. Residues 101 to 158 (RCGRARTPSGENPKESKPQAGTARSQDVNRRDQQRNSGTSTTPSRSNSGGVQDTEMGP) form a disordered region. Residues 135 to 151 (RNSGTSTTPSRSNSGGV) are compositionally biased toward polar residues. One can recognise a Thyroglobulin type-1 domain in the interval 156–231 (MGPCRKHLDS…SEGGDGSSLC (76 aa)). Intrachain disulfides connect Cys159/Cys186, Cys197/Cys208, and Cys210/Cys231. The interval 215-237 (GQPLPGSSEGGDGSSLCPTGSSG) is disordered.

In terms of assembly, interacts (via C-terminal domain) with PHB2. In terms of processing, O-glycosylated.

The protein localises to the secreted. Functionally, IGF-binding proteins prolong the half-life of the IGFs and have been shown to either inhibit or stimulate the growth promoting effects of the IGFs on cell culture. They alter the interaction of IGFs with their cell surface receptors. Activates the MAPK signaling pathway and induces cell migration. This chain is Insulin-like growth factor-binding protein 6 (IGFBP6), found in Bos taurus (Bovine).